The chain runs to 128 residues: Sulfurtransferase TusD (128 aa).

Catalysis depends on Cys-78, which acts as the Cysteine persulfide intermediate.

Belongs to the DsrE/TusD family. Heterohexamer, formed by a dimer of trimers. The hexameric TusBCD complex contains 2 copies each of TusB, TusC and TusD. The TusBCD complex interacts with TusE.

Its subcellular location is the cytoplasm. Its function is as follows. Part of a sulfur-relay system required for 2-thiolation of 5-methylaminomethyl-2-thiouridine (mnm(5)s(2)U) at tRNA wobble positions. Accepts sulfur from TusA and transfers it in turn to TusE. In Salmonella newport (strain SL254), this protein is Sulfurtransferase TusD.